The chain runs to 173 residues: Large ribosomal subunit protein uL10 (173 aa).

This sequence belongs to the universal ribosomal protein uL10 family. As to quaternary structure, part of the ribosomal stalk of the 50S ribosomal subunit. The N-terminus interacts with L11 and the large rRNA to form the base of the stalk. The C-terminus forms an elongated spine to which L12 dimers bind in a sequential fashion forming a multimeric L10(L12)X complex.

Functionally, forms part of the ribosomal stalk, playing a central role in the interaction of the ribosome with GTP-bound translation factors. This chain is Large ribosomal subunit protein uL10, found in Geobacter sp. (strain M21).